The chain runs to 149 residues: Lipoprotein signal peptidase (149 aa).

Transmembrane regions (helical) follow at residues 53–73 (MPGK…ALVI) and 89–109 (GLIA…GFVI). Active-site residues include D110 and D124. Residues 119-139 (VFNLADSAIVCGGILLLILVL) form a helical membrane-spanning segment.

Belongs to the peptidase A8 family.

The protein localises to the cell membrane. It catalyses the reaction Release of signal peptides from bacterial membrane prolipoproteins. Hydrolyzes -Xaa-Yaa-Zaa-|-(S,diacylglyceryl)Cys-, in which Xaa is hydrophobic (preferably Leu), and Yaa (Ala or Ser) and Zaa (Gly or Ala) have small, neutral side chains.. Its pathway is protein modification; lipoprotein biosynthesis (signal peptide cleavage). This protein specifically catalyzes the removal of signal peptides from prolipoproteins. The sequence is that of Lipoprotein signal peptidase from Syntrophomonas wolfei subsp. wolfei (strain DSM 2245B / Goettingen).